The sequence spans 285 residues: GPN-loop GTPase 3 (285 aa).

13–18 (GSGKST) is a binding site for GTP. The Gly-Pro-Asn (GPN)-loop; involved in dimer interface motif lies at 72–74 (GPN). 174–177 (TKMD) is a binding site for GTP. Residues 262–285 (EPKEVDEEPSNSNFDAFFQDTADS) form a disordered region.

It belongs to the GPN-loop GTPase family. In terms of assembly, heterodimer with gpn1. Binds to RNA polymerase II (RNAPII).

Functionally, small GTPase required for proper localization of RNA polymerase II (RNAPII). May act at an RNAP assembly step prior to nuclear import. In Danio rerio (Zebrafish), this protein is GPN-loop GTPase 3.